A 148-amino-acid chain; its full sequence is Putative pre-16S rRNA nuclease (148 aa).

It belongs to the YqgF nuclease family.

Its subcellular location is the cytoplasm. Its function is as follows. Could be a nuclease involved in processing of the 5'-end of pre-16S rRNA. This chain is Putative pre-16S rRNA nuclease, found in Chlamydia trachomatis serovar L2 (strain ATCC VR-902B / DSM 19102 / 434/Bu).